Consider the following 621-residue polypeptide: Polycystin-2-like protein 2 (621 aa).

Residues 1 to 31 (MSEATWWYRGGTSKHDLHYRREAEVNTTLEE) are Cytoplasmic-facing. The helical transmembrane segment at 32–52 (LLLYFIFLINLCILTFGMVNP) threads the bilayer. The Extracellular segment spans residues 53-277 (HMYYLNKVMS…SVKLLRYVSY (225 aa)). 2 N-linked (GlcNAc...) asparagine glycosylation sites follow: asparagine 115 and asparagine 138. Residues 278-298 (YDYFIASCEVIFCIFLFVFII) form a helical membrane-spanning segment. At 299–314 (QELRKVNEFKSAYFRS) the chain is on the cytoplasmic side. Residues 315 to 335 (VWNWLEMLLLLLCFLAVSFYA) form a helical membrane-spanning segment. Residues 336–360 (YCNMQSFLLLGQLLKNTDSYPDFYF) lie on the Extracellular side of the membrane. The chain crosses the membrane as a helical span at residues 361 to 381 (LAYWHIYYNNVIAITIFFAWI). Topologically, residues 382–406 (KIFKFISFNETMSQLSSTLSRCMKD) are cytoplasmic. Residues 407 to 427 (IVGFAIMFFIIFSAYAQLGFL) form a helical membrane-spanning segment. The Extracellular portion of the chain corresponds to 428-468 (VFGSQVDDFSTFQNSIFAQFRIVLGDFNFAGIQQANWILGP). Residues 469 to 489 (IYFITFIFFVFFVLLNMFLAI) traverse the membrane as a helical segment. The Cytoplasmic portion of the chain corresponds to 490-621 (INDTYSEVKA…KLNQLMRKLH (132 aa)). Positions 521–551 (NVLEKLRLKKAQAKEEKKMQTTDLAQRARRD) form a coiled coil.

It belongs to the polycystin family. Interacts with TRPC1 and TRPC5. As to expression, expressed only in testis and heart.

The protein localises to the membrane. In terms of biological role, exhibits a lower single conductance but no spontaneous channel activity. May function as a regulator of calcium channels or a channel component involving Ca2(+) homeostasis. The sequence is that of Polycystin-2-like protein 2 from Mus musculus (Mouse).